The following is a 262-amino-acid chain: Nurim (262 aa).

At 1–4 (MAPA) the chain is on the nuclear side. A helical membrane pass occupies residues 5-28 (LLLIPAALASFILAFGTGVEFVRF). Topologically, residues 29–58 (TSLRPLLGRISESGSPDARQGWLAALQDQS) are perinuclear space. The helical transmembrane segment at 59–80 (ILVPLVWDLGLLLLFVGQHSLM) threads the bilayer. The Nuclear segment spans residues 81–97 (ATETVKEWMSRYFGVLQ). A helical membrane pass occupies residues 98 to 114 (RSLYVACTALALQLVMR). The Perinuclear space portion of the chain corresponds to 115-133 (YWEPVPRGPVLWETRTEPW). The helical transmembrane segment at 134–164 (ATWVPLLCFVLHVISWLLIFSILLVFDYAEL) threads the bilayer. Over 165-191 (MGLKQVYYHVLGLGEPLALKSPRALRL) the chain is Nuclear. A helical transmembrane segment spans residues 192 to 210 (FSHLRHPVCVELLTVLWVV). Over 211 to 216 (PTLGTD) the chain is Perinuclear space. Residues 217-234 (RLLLALLLTLYLGLAHGL) form a helical membrane-spanning segment. Residues 235 to 262 (DQHDLRYLRAQLQRKLHLLSRPQDGEAE) lie on the Nuclear side of the membrane.

It belongs to the nurim family.

It is found in the nucleus inner membrane. In Bos taurus (Bovine), this protein is Nurim (NRM).